A 323-amino-acid chain; its full sequence is Porphobilinogen deaminase (323 aa).

S-(dipyrrolylmethanemethyl)cysteine is present on Cys-240.

Belongs to the HMBS family. Monomer. Dipyrromethane serves as cofactor.

It carries out the reaction 4 porphobilinogen + H2O = hydroxymethylbilane + 4 NH4(+). It participates in porphyrin-containing compound metabolism; protoporphyrin-IX biosynthesis; coproporphyrinogen-III from 5-aminolevulinate: step 2/4. Functionally, tetrapolymerization of the monopyrrole PBG into the hydroxymethylbilane pre-uroporphyrinogen in several discrete steps. This is Porphobilinogen deaminase from Sulfurovum sp. (strain NBC37-1).